A 429-amino-acid chain; its full sequence is Glutamate-1-semialdehyde 2,1-aminomutase 2 (429 aa).

Lysine 268 carries the N6-(pyridoxal phosphate)lysine modification.

It belongs to the class-III pyridoxal-phosphate-dependent aminotransferase family. HemL subfamily. Homodimer. Pyridoxal 5'-phosphate serves as cofactor.

Its subcellular location is the cytoplasm. It catalyses the reaction (S)-4-amino-5-oxopentanoate = 5-aminolevulinate. Its pathway is porphyrin-containing compound metabolism; protoporphyrin-IX biosynthesis; 5-aminolevulinate from L-glutamyl-tRNA(Glu): step 2/2. The chain is Glutamate-1-semialdehyde 2,1-aminomutase 2 from Staphylococcus carnosus (strain TM300).